The primary structure comprises 664 residues: DNA ligase (664 aa).

Residues 32–36 (DKEYD) and 80–81 (SL) each bind NAD(+). Lys122 serves as the catalytic N6-AMP-lysine intermediate. Residues Arg144, Glu178, and Lys314 each contribute to the NAD(+) site. 4 residues coordinate Zn(2+): Cys407, Cys410, Cys423, and Cys429. In terms of domain architecture, BRCT spans 587–664 (IDENPFMGKT…NEEEFSNKIK (78 aa)).

Belongs to the NAD-dependent DNA ligase family. LigA subfamily. Requires Mg(2+) as cofactor. It depends on Mn(2+) as a cofactor.

It catalyses the reaction NAD(+) + (deoxyribonucleotide)n-3'-hydroxyl + 5'-phospho-(deoxyribonucleotide)m = (deoxyribonucleotide)n+m + AMP + beta-nicotinamide D-nucleotide.. In terms of biological role, DNA ligase that catalyzes the formation of phosphodiester linkages between 5'-phosphoryl and 3'-hydroxyl groups in double-stranded DNA using NAD as a coenzyme and as the energy source for the reaction. It is essential for DNA replication and repair of damaged DNA. This chain is DNA ligase, found in Clostridium botulinum (strain Kyoto / Type A2).